The chain runs to 273 residues: Ribosomal RNA small subunit methyltransferase A (273 aa).

Asn-18, Leu-20, Gly-45, Glu-66, Asp-91, and Asn-113 together coordinate S-adenosyl-L-methionine.

It belongs to the class I-like SAM-binding methyltransferase superfamily. rRNA adenine N(6)-methyltransferase family. RsmA subfamily.

It localises to the cytoplasm. It catalyses the reaction adenosine(1518)/adenosine(1519) in 16S rRNA + 4 S-adenosyl-L-methionine = N(6)-dimethyladenosine(1518)/N(6)-dimethyladenosine(1519) in 16S rRNA + 4 S-adenosyl-L-homocysteine + 4 H(+). Specifically dimethylates two adjacent adenosines (A1518 and A1519) in the loop of a conserved hairpin near the 3'-end of 16S rRNA in the 30S particle. May play a critical role in biogenesis of 30S subunits. In Citrobacter koseri (strain ATCC BAA-895 / CDC 4225-83 / SGSC4696), this protein is Ribosomal RNA small subunit methyltransferase A.